We begin with the raw amino-acid sequence, 328 residues long: Fructose-1,6-bisphosphatase class 1 (328 aa).

Residues Glu91, Asp110, Leu112, and Asp113 each contribute to the Mg(2+) site. Residues 113–116 (DGSS), Asn205, and 257–259 (YLY) each bind substrate. Glu277 provides a ligand contact to Mg(2+).

Belongs to the FBPase class 1 family. Homotetramer. Requires Mg(2+) as cofactor.

The protein localises to the cytoplasm. It catalyses the reaction beta-D-fructose 1,6-bisphosphate + H2O = beta-D-fructose 6-phosphate + phosphate. The protein operates within carbohydrate biosynthesis; gluconeogenesis. This chain is Fructose-1,6-bisphosphatase class 1, found in Azorhizobium caulinodans (strain ATCC 43989 / DSM 5975 / JCM 20966 / LMG 6465 / NBRC 14845 / NCIMB 13405 / ORS 571).